Consider the following 588-residue polypeptide: Adenine deaminase (588 aa).

It belongs to the metallo-dependent hydrolases superfamily. Adenine deaminase family. In terms of assembly, homodimer. Mn(2+) is required as a cofactor.

It carries out the reaction adenine + H2O + H(+) = hypoxanthine + NH4(+). In Escherichia coli O7:K1 (strain IAI39 / ExPEC), this protein is Adenine deaminase.